Here is a 750-residue protein sequence, read N- to C-terminus: Cation-transporting P-type ATPase B (750 aa).

The region spanning 17–80 is the HMA domain; it reads RRIQLDVAGM…VIEQAGYRAT (64 aa). Positions 28 and 31 each coordinate a metal cation. 6 consecutive transmembrane segments (helical) span residues 104–124, 129–149, 167–187, 200–220, 360–380, and 389–409; these read LIVAALLFVPLADLSTMFAIV, FPGWGYLLTALAAPIVTWAAW, ETLISAGILAATGWSLSTIFV, AILHSDSIYFEVAAGVTVFVL, IAAVFVPMVFVIAGLAGASWL, and AFSVVLGVLVIACPCTLGLAT. Asp-445 acts as the 4-aspartylphosphate intermediate in catalysis. Transmembrane regions (helical) follow at residues 471-491, 500-520, 547-567, 663-683, 693-713, and 715-735; these read VLALASAVEAASEHSVATAIV, VADFVAFAGCGVSGVVAEHHV, SRGETVVFVSVDGVACGAVAI, VAIGAADLILVRDSLGVVPVA, TIRINMIWAFGYNVAAIPIAS, and GLLNPLIAGAAMAFSSFFVVS.

The protein belongs to the cation transport ATPase (P-type) (TC 3.A.3) family. Type IB subfamily.

The protein localises to the cell membrane. The catalysed reaction is ATP + H2O = ADP + phosphate + H(+). The protein is Cation-transporting P-type ATPase B (ctpB) of Mycobacterium leprae (strain TN).